Here is a 260-residue protein sequence, read N- to C-terminus: Carbonic anhydrase 2 (260 aa).

Positions 3–259 (HHWGYDSHNG…LKSREVRASF (257 aa)) constitute an Alpha-carbonic anhydrase domain. The active-site Proton donor/acceptor is H64. Zn(2+) contacts are provided by H94, H96, and H119. 198–199 (TT) contributes to the substrate binding site.

Belongs to the alpha-carbonic anhydrase family. The cofactor is Zn(2+).

The protein localises to the cytoplasm. The protein resides in the cell membrane. It catalyses the reaction hydrogencarbonate + H(+) = CO2 + H2O. The catalysed reaction is urea = cyanamide + H2O. Inhibited by acetazolamide. Catalyzes the reversible hydration of carbon dioxide. Can also hydrate cyanamide to urea. The polypeptide is Carbonic anhydrase 2 (CA2) (Gallus gallus (Chicken)).